We begin with the raw amino-acid sequence, 243 residues long: Adenosylcobinamide-GDP ribazoletransferase (243 aa).

5 helical membrane passes run 31 to 48 (LLFY…LWVL), 61 to 81 (AALL…DGLA), 109 to 129 (IAVV…VALI), 134 to 154 (GFAL…LFLC), and 188 to 208 (LLLG…LFFW).

The protein belongs to the CobS family. Requires Mg(2+) as cofactor.

It localises to the cell inner membrane. The catalysed reaction is alpha-ribazole + adenosylcob(III)inamide-GDP = adenosylcob(III)alamin + GMP + H(+). The enzyme catalyses alpha-ribazole 5'-phosphate + adenosylcob(III)inamide-GDP = adenosylcob(III)alamin 5'-phosphate + GMP + H(+). Its pathway is cofactor biosynthesis; adenosylcobalamin biosynthesis; adenosylcobalamin from cob(II)yrinate a,c-diamide: step 7/7. Joins adenosylcobinamide-GDP and alpha-ribazole to generate adenosylcobalamin (Ado-cobalamin). Also synthesizes adenosylcobalamin 5'-phosphate from adenosylcobinamide-GDP and alpha-ribazole 5'-phosphate. The polypeptide is Adenosylcobinamide-GDP ribazoletransferase (Pseudomonas fluorescens (strain ATCC BAA-477 / NRRL B-23932 / Pf-5)).